We begin with the raw amino-acid sequence, 309 residues long: Ribonuclease Z (309 aa).

Positions 63, 65, 67, 68, 145, 216, and 274 each coordinate Zn(2+). Asp-67 functions as the Proton acceptor in the catalytic mechanism.

The protein belongs to the RNase Z family. In terms of assembly, homodimer. Zn(2+) is required as a cofactor.

The catalysed reaction is Endonucleolytic cleavage of RNA, removing extra 3' nucleotides from tRNA precursor, generating 3' termini of tRNAs. A 3'-hydroxy group is left at the tRNA terminus and a 5'-phosphoryl group is left at the trailer molecule.. Zinc phosphodiesterase, which displays some tRNA 3'-processing endonuclease activity. Probably involved in tRNA maturation, by removing a 3'-trailer from precursor tRNA. The protein is Ribonuclease Z of Streptococcus agalactiae serotype V (strain ATCC BAA-611 / 2603 V/R).